The following is a 942-amino-acid chain: DNA mismatch repair protein MSH2 (942 aa).

667 to 674 (GPNMGGKS) is a binding site for ATP.

Belongs to the DNA mismatch repair MutS family. In terms of assembly, heterodimer of MSH2 and MSH6 (GTBP).

The protein localises to the nucleus. In terms of biological role, involved in postreplication mismatch repair. Binds specifically to DNA containing mismatched nucleotides thus providing a target for the excision repair processes characteristic of postreplication mismatch repair. The protein is DNA mismatch repair protein MSH2 (MUS1) of Zea mays (Maize).